Consider the following 277-residue polypeptide: Large ribosomal subunit protein mL46 (277 aa).

Lys-217 is modified (N6-succinyllysine). At Lys-228 the chain carries N6-acetyllysine. Residue Lys-246 is modified to N6-succinyllysine.

Belongs to the mitochondrion-specific ribosomal protein mL46 family. Component of the mitochondrial ribosome large subunit (39S) which comprises a 16S rRNA and about 50 distinct proteins.

It is found in the mitochondrion. This chain is Large ribosomal subunit protein mL46 (Mrpl46), found in Rattus norvegicus (Rat).